Consider the following 301-residue polypeptide: Large ribosomal subunit protein uL4 (301 aa).

Residues 1–223 (MNETKTIDVL…TQALSAQPEV (223 aa)) form a large ribosomal subunit protein uL4 region. The interval 49-105 (QGTHATKTRGQVSGGGKKPWRQKGTGRARQGSTRAPQWVGGGTVHGPQPRSYAQRTP) is disordered. Positions 224–301 (PETNVADQHP…KSDSEKEDAK (78 aa)) are unknown.

It belongs to the universal ribosomal protein uL4 family. As to quaternary structure, part of the 50S ribosomal subunit.

Functionally, one of the primary rRNA binding proteins, this protein initially binds near the 5'-end of the 23S rRNA. It is important during the early stages of 50S assembly. It makes multiple contacts with different domains of the 23S rRNA in the assembled 50S subunit and ribosome. Forms part of the polypeptide exit tunnel. The polypeptide is Large ribosomal subunit protein uL4 (Cutibacterium acnes (strain DSM 16379 / KPA171202) (Propionibacterium acnes)).